The following is a 167-amino-acid chain: Putative pre-16S rRNA nuclease (167 aa).

The segment at 1–24 (MVLTQHRVPDRPGDPDQDPGRGRR) is disordered. Positions 7–21 (RVPDRPGDPDQDPGR) are enriched in basic and acidic residues.

The protein belongs to the YqgF nuclease family.

The protein resides in the cytoplasm. In terms of biological role, could be a nuclease involved in processing of the 5'-end of pre-16S rRNA. The chain is Putative pre-16S rRNA nuclease from Mycolicibacterium paratuberculosis (strain ATCC BAA-968 / K-10) (Mycobacterium paratuberculosis).